We begin with the raw amino-acid sequence, 160 residues long: Large ribosomal subunit protein bL19 (160 aa).

2 stretches are compositionally biased toward basic and acidic residues: residues 1–15 (MTED…KEES) and 28–39 (ATRETKPKDSPS). Residues 1–44 (MTEDLKNTSPSKEESNEIEESSKATPKATRETKPKDSPSKTKLS) form a disordered region.

It belongs to the bacterial ribosomal protein bL19 family.

This protein is located at the 30S-50S ribosomal subunit interface and may play a role in the structure and function of the aminoacyl-tRNA binding site. The protein is Large ribosomal subunit protein bL19 of Prochlorococcus marinus (strain SARG / CCMP1375 / SS120).